The sequence spans 138 residues: Chorion protein S16 (138 aa).

The signal sequence occupies residues 1-20 (MSATLRLLCLMACCVALAVA).

The protein belongs to the chorion protein S16 family.

The protein resides in the secreted. Functionally, chorion membrane (egg shell) protein; plays a role in protecting the egg from the environment. This chain is Chorion protein S16 (Cp16), found in Drosophila melanogaster (Fruit fly).